The following is a 245-amino-acid chain: MITFISKFLASKSLTLNSQKSYLYDLQQFAEIIGEEVTPNKLKLYEQSLADLKVSAKKRKISAVNQFLFFLYENEVLDRFYKIKNKEKLPLLTPAYQEVDLSVLYRKIGDSKGQLIALLIVELGLSPSEIIQLKWENIALEFQVLTIVNEKVMRILEIPQLLLPYLEGEHKAVYLFDNKGEAYSRQWLFQKLNYYLASVDLSQMTAQKLREQYIIKEKNKGTAILDLTRKLGLKSPVTLEKYFKN.

Residues 1–72 (MITFISKFLA…AVNQFLFFLY (72 aa)) enclose the Core-binding (CB) domain. One can recognise a Tyr recombinase domain in the interval 90-245 (PLLTPAYQEV…PVTLEKYFKN (156 aa)). Catalysis depends on residues Lys-151 and Arg-210. Tyr-242 acts as the O-(3'-phospho-DNA)-tyrosine intermediate in catalysis.

It belongs to the 'phage' integrase family. XerD-like subfamily.

Its subcellular location is the cytoplasm. Putative tyrosine recombinase. Not involved in the cutting and rejoining of the recombining DNA molecules on dif(SL) site. This is Tyrosine recombinase XerD-like from Streptococcus mutans serotype c (strain ATCC 700610 / UA159).